Here is a 168-residue protein sequence, read N- to C-terminus: Photosystem I assembly protein Ycf3 (168 aa).

TPR repeat units follow at residues alanine 35–proline 68, serine 72–leucine 105, and glycine 120–asparagine 153.

It belongs to the Ycf3 family.

It is found in the plastid. It localises to the chloroplast thylakoid membrane. Functionally, essential for the assembly of the photosystem I (PSI) complex. May act as a chaperone-like factor to guide the assembly of the PSI subunits. The sequence is that of Photosystem I assembly protein Ycf3 from Plantago lanceolata (English plantain).